The following is a 203-amino-acid chain: NADH-ubiquinone oxidoreductase chain 6 (203 aa).

The next 5 helical transmembrane spans lie at 16-36 (SNIL…TIVS), 40-60 (VVSV…LIMI), 70-90 (LLVY…LINI), 102-122 (YIPL…QKII), and 179-199 (WLII…VISI).

Belongs to the complex I subunit 6 family.

The protein localises to the mitochondrion membrane. It catalyses the reaction a ubiquinone + NADH + 5 H(+)(in) = a ubiquinol + NAD(+) + 4 H(+)(out). Core subunit of the mitochondrial membrane respiratory chain NADH dehydrogenase (Complex I) that is believed to belong to the minimal assembly required for catalysis. Complex I functions in the transfer of electrons from NADH to the respiratory chain. The immediate electron acceptor for the enzyme is believed to be ubiquinone. The chain is NADH-ubiquinone oxidoreductase chain 6 (ND6) from Trichophyton rubrum (Athlete's foot fungus).